The following is a 268-amino-acid chain: Acyl-CoA-binding domain-containing protein 4 (268 aa).

In terms of domain architecture, ACB spans 12–101 (CQKQFQAAVS…MKLVAQKVID (90 aa)). Residues 23–32 (IQNLPKNGSY), 43–47 (YSYYK), lysine 69, and tyrosine 88 contribute to the an acyl-CoA site. A disordered region spans residues 151–175 (AVSEPPCLPKEPAPPSPESHSPRDL). Over residues 156-167 (PCLPKEPAPPSP) the composition is skewed to pro residues. Residues serine 166 and serine 171 each carry the phosphoserine modification.

Binds medium- and long-chain acyl-CoA esters and may function as an intracellular carrier of acyl-CoA esters. This Homo sapiens (Human) protein is Acyl-CoA-binding domain-containing protein 4 (ACBD4).